Consider the following 338-residue polypeptide: UDP-3-O-acylglucosamine N-acyltransferase (338 aa).

Catalysis depends on H239, which acts as the Proton acceptor.

Belongs to the transferase hexapeptide repeat family. LpxD subfamily. In terms of assembly, homotrimer.

The enzyme catalyses a UDP-3-O-[(3R)-3-hydroxyacyl]-alpha-D-glucosamine + a (3R)-hydroxyacyl-[ACP] = a UDP-2-N,3-O-bis[(3R)-3-hydroxyacyl]-alpha-D-glucosamine + holo-[ACP] + H(+). It functions in the pathway bacterial outer membrane biogenesis; LPS lipid A biosynthesis. Catalyzes the N-acylation of UDP-3-O-acylglucosamine using 3-hydroxyacyl-ACP as the acyl donor. Is involved in the biosynthesis of lipid A, a phosphorylated glycolipid that anchors the lipopolysaccharide to the outer membrane of the cell. This Xylella fastidiosa (strain M12) protein is UDP-3-O-acylglucosamine N-acyltransferase.